A 393-amino-acid polypeptide reads, in one-letter code: Autophagy-related protein 18c (393 aa).

4 WD repeats span residues 27-65, 70-114, 199-239, and 244-283; these read KEEA…ETFR, DGGF…CISE, AHDS…RLQE, and VDRA…VGED.

It belongs to the WD repeat PROPPIN family. Component of the PI(3,5)P2 regulatory complex at least composed of ATG18, SAC/FIG4, FAB1 and VAC14. Expressed in roots, stems, flowers and leaves.

The protein resides in the preautophagosomal structure membrane. It localises to the vacuole membrane. In terms of biological role, the PI(3,5)P2 regulatory complex regulates both the synthesis and turnover of phosphatidylinositol 3,5-bisphosphate (PtdIns(3,5)P2). Required for autophagy. This chain is Autophagy-related protein 18c (ATG18C), found in Arabidopsis thaliana (Mouse-ear cress).